A 417-amino-acid polypeptide reads, in one-letter code: Phosphoglycerate kinase (417 aa).

Val23, Asp24, Phe25, Asn26, Gln39, Arg40, Ser63, His64, Gly66, Arg67, Leu122, Arg123, His170, and Arg171 together coordinate (2R)-3-phosphoglycerate. An ADP-binding site is contributed by Gly214. Residue Gly214 participates in CDP binding. Residues Ala215 and Lys216 each coordinate AMP. Residue Ala215 coordinates ATP. Ala215 is a binding site for Mg(2+). Residue Asp219 participates in CDP binding. Asp219 contacts Mg(2+). Lys220 provides a ligand contact to AMP. Lys220 contributes to the ATP binding site. Gly238 is a binding site for ADP. Gly238 is a binding site for CDP. Residues Gly239 and Gly313 each coordinate AMP. 2 residues coordinate ATP: Gly239 and Gly313. CDP-binding residues include Gly338, Ala340, and Phe343. Residue Phe343 participates in ADP binding. Position 344 (Glu344) interacts with AMP. The ATP site is built by Glu344, Asp375, and Thr376. Mg(2+) is bound at residue Asp375.

It belongs to the phosphoglycerate kinase family. In terms of assembly, monomer. It depends on Mg(2+) as a cofactor.

It is found in the cytoplasm. Its subcellular location is the mitochondrion. The catalysed reaction is (2R)-3-phosphoglycerate + ATP = (2R)-3-phospho-glyceroyl phosphate + ADP. Its pathway is carbohydrate degradation; glycolysis; pyruvate from D-glyceraldehyde 3-phosphate: step 2/5. Catalyzes one of the two ATP producing reactions in the glycolytic pathway via the reversible conversion of 1,3-diphosphoglycerate to 3-phosphoglycerate. Both L- and D- forms of purine and pyrimidine nucleotides can be used as substrates, but the activity is much lower on pyrimidines. Negatively regulates the biosynthesis of acetyl-CoA from pyruvate in the mitochondrion. This is Phosphoglycerate kinase (pgk1) from Hypocrea rufa (Trichoderma viride).